A 224-amino-acid chain; its full sequence is Cutinase 1 (224 aa).

The N-terminal stretch at 1 to 16 is a signal peptide; it reads MKFLSVLSLAITLAAA. The cysteines at positions 46 and 125 are disulfide-linked. The active-site Nucleophile is the Ser136. Cys187 and Cys194 are oxidised to a cystine. Asp191 is an active-site residue. His204 serves as the catalytic Proton donor/acceptor.

It belongs to the cutinase family. Post-translationally, the 2 disulfide bonds play a critical role in holding the catalytic residues in juxta-position; reduction of the disulfide bridges results in the complete inactivation of the enzyme. In terms of processing, the N-terminus is blocked.

The protein resides in the secreted. It catalyses the reaction cutin + H2O = cutin monomers.. With respect to regulation, inhibited by diisopropyl fluorophosphate (DFP). Its function is as follows. Catalyzes the hydrolysis of complex carboxylic polyesters found in the cell wall of plants. Degrades cutin, a macromolecule that forms the structure of the plant cuticle. Allows pathogenic fungi to penetrate through the cuticular barrier into the host plant during the initial stage of fungal infection. The polypeptide is Cutinase 1 (CUTA) (Colletotrichum gloeosporioides (Anthracnose fungus)).